An 895-amino-acid chain; its full sequence is Protein translocase subunit SecA (895 aa).

Residues Gln-86, 104 to 108 (GEGKT), and Asp-494 contribute to the ATP site. Low complexity-rich tracts occupy residues 838–849 (AAATPPGFGAPP) and 870–882 (GDAA…TGNR). The disordered stretch occupies residues 838-895 (AAATPPGFGAPPVRQQLQYSAPTAEGDVEVHAGDAAATDADTGNRAQRRANQRQQREV).

Belongs to the SecA family. Monomer and homodimer. Part of the essential Sec protein translocation apparatus which comprises SecA, SecYEG and auxiliary proteins SecDF. Other proteins may also be involved.

The protein localises to the cell membrane. It localises to the cytoplasm. It carries out the reaction ATP + H2O + cellular proteinSide 1 = ADP + phosphate + cellular proteinSide 2.. Functionally, part of the Sec protein translocase complex. Interacts with the SecYEG preprotein conducting channel. Has a central role in coupling the hydrolysis of ATP to the transfer of proteins into and across the cell membrane, serving as an ATP-driven molecular motor driving the stepwise translocation of polypeptide chains across the membrane. The chain is Protein translocase subunit SecA from Kineococcus radiotolerans (strain ATCC BAA-149 / DSM 14245 / SRS30216).